The primary structure comprises 89 residues: LYR motif-containing protein 4 (89 aa).

Belongs to the complex I LYR family.

Its subcellular location is the mitochondrion. The protein resides in the nucleus. It functions in the pathway cofactor biosynthesis; iron-sulfur cluster biosynthesis. In terms of biological role, required for nuclear and mitochondrial iron-sulfur protein biosynthesis. The protein is LYR motif-containing protein 4 (lyrm4) of Xenopus laevis (African clawed frog).